A 271-amino-acid chain; its full sequence is ATP synthase subunit a (271 aa).

5 consecutive transmembrane segments (helical) span residues 40-60 (TINI…LVLF), 100-120 (LIAP…LMDL), 146-166 (DVNV…FYSI), 220-240 (LIFI…LNVP), and 242-262 (AIFH…LTIV).

Belongs to the ATPase A chain family. F-type ATPases have 2 components, CF(1) - the catalytic core - and CF(0) - the membrane proton channel. CF(1) has five subunits: alpha(3), beta(3), gamma(1), delta(1), epsilon(1). CF(0) has three main subunits: a(1), b(2) and c(9-12). The alpha and beta chains form an alternating ring which encloses part of the gamma chain. CF(1) is attached to CF(0) by a central stalk formed by the gamma and epsilon chains, while a peripheral stalk is formed by the delta and b chains.

Its subcellular location is the cell inner membrane. Its function is as follows. Key component of the proton channel; it plays a direct role in the translocation of protons across the membrane. This Shigella dysenteriae serotype 1 (strain Sd197) protein is ATP synthase subunit a.